A 31-amino-acid polypeptide reads, in one-letter code: Cytochrome b6-f complex subunit 6 (31 aa).

Residues 4–24 (LTSYFGFLLAALTITLALFIG) form a helical membrane-spanning segment.

This sequence belongs to the PetL family. In terms of assembly, the 4 large subunits of the cytochrome b6-f complex are cytochrome b6, subunit IV (17 kDa polypeptide, PetD), cytochrome f and the Rieske protein, while the 4 small subunits are PetG, PetL, PetM and PetN. The complex functions as a dimer.

It is found in the plastid. The protein resides in the chloroplast thylakoid membrane. Its function is as follows. Component of the cytochrome b6-f complex, which mediates electron transfer between photosystem II (PSII) and photosystem I (PSI), cyclic electron flow around PSI, and state transitions. PetL is important for photoautotrophic growth as well as for electron transfer efficiency and stability of the cytochrome b6-f complex. The protein is Cytochrome b6-f complex subunit 6 of Triticum aestivum (Wheat).